The sequence spans 146 residues: 3-hydroxyacyl-[acyl-carrier-protein] dehydratase FabZ (146 aa).

The active site involves histidine 51.

It belongs to the thioester dehydratase family. FabZ subfamily.

It localises to the cytoplasm. It catalyses the reaction a (3R)-hydroxyacyl-[ACP] = a (2E)-enoyl-[ACP] + H2O. Functionally, involved in unsaturated fatty acids biosynthesis. Catalyzes the dehydration of short chain beta-hydroxyacyl-ACPs and long chain saturated and unsaturated beta-hydroxyacyl-ACPs. The polypeptide is 3-hydroxyacyl-[acyl-carrier-protein] dehydratase FabZ (Staphylococcus aureus (strain Mu3 / ATCC 700698)).